The sequence spans 249 residues: Flagellar L-ring protein (249 aa).

The signal sequence occupies residues 1-25; that stretch reads MSRLRTSHALRTAAALVAVGCLASG. Cys-26 carries N-palmitoyl cysteine lipidation. The S-diacylglycerol cysteine moiety is linked to residue Cys-26.

This sequence belongs to the FlgH family. In terms of assembly, the basal body constitutes a major portion of the flagellar organelle and consists of four rings (L,P,S, and M) mounted on a central rod.

Its subcellular location is the cell outer membrane. It is found in the bacterial flagellum basal body. In terms of biological role, assembles around the rod to form the L-ring and probably protects the motor/basal body from shearing forces during rotation. The protein is Flagellar L-ring protein of Afipia carboxidovorans (strain ATCC 49405 / DSM 1227 / KCTC 32145 / OM5) (Oligotropha carboxidovorans).